A 117-amino-acid polypeptide reads, in one-letter code: Holo-[acyl-carrier-protein] synthase (117 aa).

Positions 8 and 59 each coordinate Mg(2+).

The protein belongs to the P-Pant transferase superfamily. AcpS family. It depends on Mg(2+) as a cofactor.

It is found in the cytoplasm. It catalyses the reaction apo-[ACP] + CoA = holo-[ACP] + adenosine 3',5'-bisphosphate + H(+). Transfers the 4'-phosphopantetheine moiety from coenzyme A to a Ser of acyl-carrier-protein. This chain is Holo-[acyl-carrier-protein] synthase, found in Staphylococcus carnosus (strain TM300).